A 700-amino-acid chain; its full sequence is Elongation factor G (700 aa).

Residues 10-286 form the tr-type G domain; sequence NKVRNIGIMA…AVIDYLPNPL (277 aa). GTP-binding positions include 19 to 26, 83 to 87, and 137 to 140; these read AHIDAGKT, DTPGH, and NKMD.

Belongs to the TRAFAC class translation factor GTPase superfamily. Classic translation factor GTPase family. EF-G/EF-2 subfamily.

It is found in the cytoplasm. Catalyzes the GTP-dependent ribosomal translocation step during translation elongation. During this step, the ribosome changes from the pre-translocational (PRE) to the post-translocational (POST) state as the newly formed A-site-bound peptidyl-tRNA and P-site-bound deacylated tRNA move to the P and E sites, respectively. Catalyzes the coordinated movement of the two tRNA molecules, the mRNA and conformational changes in the ribosome. This Rhodococcus opacus (strain B4) protein is Elongation factor G.